The following is a 555-amino-acid chain: Phosphomethylpyrimidine synthase (555 aa).

Residues Asn191, Met220, Tyr249, His285, 305–307 (SRG), 346–349 (DGLR), and Glu385 contribute to the substrate site. His389 lines the Zn(2+) pocket. Residue Tyr412 participates in substrate binding. Position 453 (His453) interacts with Zn(2+). The [4Fe-4S] cluster site is built by Cys533, Cys536, and Cys541.

It belongs to the ThiC family. Homodimer. [4Fe-4S] cluster is required as a cofactor.

It carries out the reaction 5-amino-1-(5-phospho-beta-D-ribosyl)imidazole + S-adenosyl-L-methionine = 4-amino-2-methyl-5-(phosphooxymethyl)pyrimidine + CO + 5'-deoxyadenosine + formate + L-methionine + 3 H(+). Its pathway is cofactor biosynthesis; thiamine diphosphate biosynthesis. In terms of biological role, catalyzes the synthesis of the hydroxymethylpyrimidine phosphate (HMP-P) moiety of thiamine from aminoimidazole ribotide (AIR) in a radical S-adenosyl-L-methionine (SAM)-dependent reaction. This chain is Phosphomethylpyrimidine synthase, found in Ehrlichia ruminantium (strain Gardel).